The chain runs to 453 residues: Nuclear distribution protein PAC1-2 (453 aa).

The region spanning 9–41 (QADELHKSIVAYLTANNLSTTAATLREELSLGE) is the LisH domain. The stretch at 63–87 (VVRLQKKVMDLESRSVALQSELEHS) forms a coiled coil. Residues 84–108 (LEHSTPASLSKRKDPTSWLPRSPPR) form a disordered region. WD repeat units lie at residues 113–154 (SHQA…RTLK), 156–196 (HTRA…KNTR), 200–243 (GHDH…CIKT), 246–285 (GHTG…PESK), 290–350 (GHEN…IKTL), 352–391 (GHDN…RCVK), and 396–448 (AHGQ…DKVV).

This sequence belongs to the WD repeat LIS1/nudF family. In terms of assembly, self-associates. Interacts with NDL1 and dynein.

It localises to the cytoplasm. It is found in the cytoskeleton. The protein resides in the spindle pole. Positively regulates the activity of the minus-end directed microtubule motor protein dynein. May enhance dynein-mediated microtubule sliding by targeting dynein to the microtubule plus end. Required for nuclear migration during vegetative growth as well as development. Required for retrograde early endosome (EE) transport from the hyphal tip. Required for localization of dynein to the mitotic spindle poles. Recruits additional proteins to the dynein complex at SPBs. This is Nuclear distribution protein PAC1-2 from Chaetomium globosum (strain ATCC 6205 / CBS 148.51 / DSM 1962 / NBRC 6347 / NRRL 1970) (Soil fungus).